A 91-amino-acid polypeptide reads, in one-letter code: UPF0298 protein spyM18_0447 (91 aa).

Belongs to the UPF0298 family.

It localises to the cytoplasm. The polypeptide is UPF0298 protein spyM18_0447 (Streptococcus pyogenes serotype M18 (strain MGAS8232)).